We begin with the raw amino-acid sequence, 98 residues long: Integration host factor subunit alpha (98 aa).

The interval 49-70 (FGNFDLRDKNQRPGRNPKTGED) is disordered.

Belongs to the bacterial histone-like protein family. As to quaternary structure, heterodimer of an alpha and a beta chain.

This protein is one of the two subunits of integration host factor, a specific DNA-binding protein that functions in genetic recombination as well as in transcriptional and translational control. The polypeptide is Integration host factor subunit alpha (Shewanella baltica (strain OS223)).